We begin with the raw amino-acid sequence, 374 residues long: Mannitol-1-phosphate 5-dehydrogenase (374 aa).

3-14 lines the NAD(+) pocket; it reads AVHFGAGNIGRG.

This sequence belongs to the mannitol dehydrogenase family.

The catalysed reaction is D-mannitol 1-phosphate + NAD(+) = beta-D-fructose 6-phosphate + NADH + H(+). In Shouchella clausii (strain KSM-K16) (Alkalihalobacillus clausii), this protein is Mannitol-1-phosphate 5-dehydrogenase.